The primary structure comprises 227 residues: Uridylate kinase (227 aa).

Position 9-10 (Gly9–Ser10) interacts with ATP. Gly44 contributes to the UMP binding site. Residues Gly45 and Arg49 each contribute to the ATP site. UMP is bound by residues Asp66 and Thr114–Thr120. Residues Thr140, Phe146, and Asp149 each coordinate ATP.

This sequence belongs to the UMP kinase family. Homohexamer.

It is found in the cytoplasm. The catalysed reaction is UMP + ATP = UDP + ADP. It functions in the pathway pyrimidine metabolism; CTP biosynthesis via de novo pathway; UDP from UMP (UMPK route): step 1/1. Inhibited by UTP. Functionally, catalyzes the reversible phosphorylation of UMP to UDP. The polypeptide is Uridylate kinase (Natronomonas pharaonis (strain ATCC 35678 / DSM 2160 / CIP 103997 / JCM 8858 / NBRC 14720 / NCIMB 2260 / Gabara) (Halobacterium pharaonis)).